We begin with the raw amino-acid sequence, 133 residues long: Phosphoribosyl-AMP cyclohydrolase (133 aa).

Asp82 contributes to the Mg(2+) binding site. Residue Cys83 participates in Zn(2+) binding. The Mg(2+) site is built by Asp84 and Asp86. Zn(2+) contacts are provided by Cys100 and Cys107.

Belongs to the PRA-CH family. In terms of assembly, homodimer. Mg(2+) is required as a cofactor. The cofactor is Zn(2+).

Its subcellular location is the cytoplasm. It carries out the reaction 1-(5-phospho-beta-D-ribosyl)-5'-AMP + H2O = 1-(5-phospho-beta-D-ribosyl)-5-[(5-phospho-beta-D-ribosylamino)methylideneamino]imidazole-4-carboxamide. It functions in the pathway amino-acid biosynthesis; L-histidine biosynthesis; L-histidine from 5-phospho-alpha-D-ribose 1-diphosphate: step 3/9. In terms of biological role, catalyzes the hydrolysis of the adenine ring of phosphoribosyl-AMP. The chain is Phosphoribosyl-AMP cyclohydrolase from Aromatoleum aromaticum (strain DSM 19018 / LMG 30748 / EbN1) (Azoarcus sp. (strain EbN1)).